The primary structure comprises 114 residues: Snake venom vascular endothelial growth factor (114 aa).

Glutamine 1 carries the pyrrolidone carboxylic acid modification. 3 disulfides stabilise this stretch: cysteine 14/cysteine 56, cysteine 45/cysteine 91, and cysteine 49/cysteine 93. Residues 92–114 (ECRPGSTVNNGKRKKNPKEGEPR) form a disordered region.

It belongs to the PDGF/VEGF growth factor family. Snake venom VEGF subfamily. As to quaternary structure, homodimer; disulfide-linked. Interacts with human VEGF receptor 1/FLT1. Interacts with human VEGF receptor 2/KDR. Expressed by venom gland.

It localises to the secreted. Snake venom vascular endothelial growth factor (svVEGF) that may contribute to venom dispersion and prey subjugation by inducing vascular permeability and hypotension. Induces an increase in capillary permeability after intradermal injection, as well as a drastic hypotensive effect after intravenous injection. The hypotension is mediated by nitric oxide (NO), which is produced by VEGF-activated endothelium NO synthase. Induces angiogenesis and migration of human vascular endothelial cells in vitro. Exhibits angiogenic activity by inducing human umbilical vein endothelial cells (HUVEC) to develop vessels in vitro. Induces cellular migration of HUVEC cells towards a wound in scratch assays, enhancing wound closure after 12 h by 49.5%. Induces dose-dependent leukocyte recruitment to the peritoneal cavity leading to increased vascular permeability in mice. The protein is Snake venom vascular endothelial growth factor of Crotalus durissus terrificus (South American rattlesnake).